The sequence spans 105 residues: Small ribosomal subunit protein uS10 (105 aa).

Belongs to the universal ribosomal protein uS10 family. Part of the 30S ribosomal subunit.

Its function is as follows. Involved in the binding of tRNA to the ribosomes. The protein is Small ribosomal subunit protein uS10 of Agathobacter rectalis (strain ATCC 33656 / DSM 3377 / JCM 17463 / KCTC 5835 / VPI 0990) (Eubacterium rectale).